Consider the following 265-residue polypeptide: Tryptophan synthase alpha chain (265 aa).

Residues Glu49 and Glu60 each act as proton acceptor in the active site.

It belongs to the TrpA family. In terms of assembly, tetramer of two alpha and two beta chains.

It carries out the reaction (1S,2R)-1-C-(indol-3-yl)glycerol 3-phosphate + L-serine = D-glyceraldehyde 3-phosphate + L-tryptophan + H2O. Its pathway is amino-acid biosynthesis; L-tryptophan biosynthesis; L-tryptophan from chorismate: step 5/5. The alpha subunit is responsible for the aldol cleavage of indoleglycerol phosphate to indole and glyceraldehyde 3-phosphate. The protein is Tryptophan synthase alpha chain of Herminiimonas arsenicoxydans.